Reading from the N-terminus, the 195-residue chain is HTH-type transcriptional regulator BetI (195 aa).

The region spanning 8–68 is the HTH tetR-type domain; sequence SIRRRQLIDA…ATMRDITSQL (61 aa). Positions 31–50 form a DNA-binding region, H-T-H motif; sequence TIAQIARRAGVSTGIISHYF.

It participates in amine and polyamine biosynthesis; betaine biosynthesis via choline pathway [regulation]. Functionally, repressor involved in the biosynthesis of the osmoprotectant glycine betaine. It represses transcription of the choline transporter BetT and the genes of BetAB involved in the synthesis of glycine betaine. In Escherichia coli O157:H7, this protein is HTH-type transcriptional regulator BetI.